The following is a 416-amino-acid chain: 4-hydroxy-3-methylbut-2-en-1-yl diphosphate synthase (flavodoxin) (416 aa).

[4Fe-4S] cluster is bound by residues cysteine 304, cysteine 307, cysteine 350, and glutamate 357.

It belongs to the IspG family. [4Fe-4S] cluster is required as a cofactor.

The catalysed reaction is (2E)-4-hydroxy-3-methylbut-2-enyl diphosphate + oxidized [flavodoxin] + H2O + 2 H(+) = 2-C-methyl-D-erythritol 2,4-cyclic diphosphate + reduced [flavodoxin]. The protein operates within isoprenoid biosynthesis; isopentenyl diphosphate biosynthesis via DXP pathway; isopentenyl diphosphate from 1-deoxy-D-xylulose 5-phosphate: step 5/6. Functionally, converts 2C-methyl-D-erythritol 2,4-cyclodiphosphate (ME-2,4cPP) into 1-hydroxy-2-methyl-2-(E)-butenyl 4-diphosphate. The protein is 4-hydroxy-3-methylbut-2-en-1-yl diphosphate synthase (flavodoxin) of Rhizobium etli (strain CIAT 652).